Reading from the N-terminus, the 89-residue chain is Elongation factor 1-beta (89 aa).

The protein belongs to the EF-1-beta/EF-1-delta family.

In terms of biological role, promotes the exchange of GDP for GTP in EF-1-alpha/GDP, thus allowing the regeneration of EF-1-alpha/GTP that could then be used to form the ternary complex EF-1-alpha/GTP/AAtRNA. The sequence is that of Elongation factor 1-beta from Methanocella arvoryzae (strain DSM 22066 / NBRC 105507 / MRE50).